Consider the following 293-residue polypeptide: ATP synthase subunit a (293 aa).

6 consecutive transmembrane segments (helical) span residues 40–60 (DSLFWSILMGLLVVFCLWLAA), 97–117 (LFVAPLALTVFLWIILMNALD), 151–171 (DLNVPMGMSLGVLLLMFYYGI), 188–208 (FHAHGLASLVLAPFNLLLNLI), 225–245 (MFAGELIFMLIALLGGAWTGF), and 264–284 (AIFHILIVLLQAFIFMMLTLV).

It belongs to the ATPase A chain family. As to quaternary structure, F-type ATPases have 2 components, CF(1) - the catalytic core - and CF(0) - the membrane proton channel. CF(1) has five subunits: alpha(3), beta(3), gamma(1), delta(1), epsilon(1). CF(0) has three main subunits: a(1), b(2) and c(9-12). The alpha and beta chains form an alternating ring which encloses part of the gamma chain. CF(1) is attached to CF(0) by a central stalk formed by the gamma and epsilon chains, while a peripheral stalk is formed by the delta and b chains.

Its subcellular location is the cell inner membrane. In terms of biological role, key component of the proton channel; it plays a direct role in the translocation of protons across the membrane. This Bordetella bronchiseptica (strain ATCC BAA-588 / NCTC 13252 / RB50) (Alcaligenes bronchisepticus) protein is ATP synthase subunit a.